The primary structure comprises 432 residues: RING finger protein 44 (432 aa).

Residues 1 to 86 are disordered; the sequence is MRPWALAVTR…GGSPRMLHPA (86 aa). Pro residues predominate over residues 56–65; it reads QQPPSRPPHL. Residues 380 to 421 form an RING-type; atypical zinc finger; that stretch reads CVVCFSDFEARQLLRVLPCNHEFHTKCVDKWLKANRTCPICR.

This is RING finger protein 44 (RNF44) from Homo sapiens (Human).